A 70-amino-acid polypeptide reads, in one-letter code: ATP synthase subunit c (70 aa).

The next 2 helical transmembrane spans lie at 4 to 24 and 47 to 67; these read IAAA…NGLI and FIGI…SFIV.

Belongs to the ATPase C chain family. In terms of assembly, F-type ATPases have 2 components, F(1) - the catalytic core - and F(0) - the membrane proton channel. F(1) has five subunits: alpha(3), beta(3), gamma(1), delta(1), epsilon(1). F(0) has three main subunits: a(1), b(2) and c(10-14). The alpha and beta chains form an alternating ring which encloses part of the gamma chain. F(1) is attached to F(0) by a central stalk formed by the gamma and epsilon chains, while a peripheral stalk is formed by the delta and b chains.

It localises to the cell membrane. Its function is as follows. F(1)F(0) ATP synthase produces ATP from ADP in the presence of a proton or sodium gradient. F-type ATPases consist of two structural domains, F(1) containing the extramembraneous catalytic core and F(0) containing the membrane proton channel, linked together by a central stalk and a peripheral stalk. During catalysis, ATP synthesis in the catalytic domain of F(1) is coupled via a rotary mechanism of the central stalk subunits to proton translocation. Functionally, key component of the F(0) channel; it plays a direct role in translocation across the membrane. A homomeric c-ring of between 10-14 subunits forms the central stalk rotor element with the F(1) delta and epsilon subunits. This Staphylococcus carnosus (strain TM300) protein is ATP synthase subunit c.